The chain runs to 228 residues: Uracil-DNA glycosylase (228 aa).

The active-site Proton acceptor is the Asp-64.

This sequence belongs to the uracil-DNA glycosylase (UDG) superfamily. UNG family.

Its subcellular location is the cytoplasm. The enzyme catalyses Hydrolyzes single-stranded DNA or mismatched double-stranded DNA and polynucleotides, releasing free uracil.. In terms of biological role, excises uracil residues from the DNA which can arise as a result of misincorporation of dUMP residues by DNA polymerase or due to deamination of cytosine. This Yersinia enterocolitica serotype O:8 / biotype 1B (strain NCTC 13174 / 8081) protein is Uracil-DNA glycosylase.